A 154-amino-acid chain; its full sequence is NADPH-dependent 7-cyano-7-deazaguanine reductase (154 aa).

A compositionally biased stretch (polar residues) spans 1–13; sequence MSKTDVSGLSQLG. Residues 1–24 form a disordered region; the sequence is MSKTDVSGLSQLGRQVDAPTSPET. The Thioimide intermediate role is filled by Cys52. Residue Asp59 is the Proton donor of the active site. Residues 74 to 76 and 93 to 94 each bind substrate; these read VES and HE.

This sequence belongs to the GTP cyclohydrolase I family. QueF type 1 subfamily.

It is found in the cytoplasm. The catalysed reaction is 7-aminomethyl-7-carbaguanine + 2 NADP(+) = 7-cyano-7-deazaguanine + 2 NADPH + 3 H(+). It participates in tRNA modification; tRNA-queuosine biosynthesis. Functionally, catalyzes the NADPH-dependent reduction of 7-cyano-7-deazaguanine (preQ0) to 7-aminomethyl-7-deazaguanine (preQ1). This Allorhizobium ampelinum (strain ATCC BAA-846 / DSM 112012 / S4) (Agrobacterium vitis (strain S4)) protein is NADPH-dependent 7-cyano-7-deazaguanine reductase.